A 276-amino-acid chain; its full sequence is MLMITSFANPRVAQAFVDYMATQGVILTIQQHNQSDVWLADESLAERVRSELARFLENPADPRYLAASWQAGHTGSGLHYRRYPFFAALRERAGPVTWVMMIACVVVFIAMQILGDQEVMLWLAWPFDPTLKFEFWRYFTHALMHFSLMHILFNLLWWWYLGGAVEKRLGSGKLIVITLISALLSGYVQQKFSGPWFGGLSGVVYALMGYVWLRGERDPQSGIYLQRGLIIFALIWIVAGWFDLFGMSMANGAHIAGLAVGLAMAFVDSLNARKRK.

6 helical membrane passes run 94-114, 142-162, 169-189, 192-212, 229-249, and 250-270; these read GPVT…MQIL, ALMH…WYLG, LGSG…GYVQ, FSGP…GYVW, LIIF…GMSM, and ANGA…VDSL. Residue Ser201 is the Nucleophile of the active site. His254 is a catalytic residue.

The protein belongs to the peptidase S54 family.

It is found in the cell inner membrane. It carries out the reaction Cleaves type-1 transmembrane domains using a catalytic dyad composed of serine and histidine that are contributed by different transmembrane domains.. Its function is as follows. Rhomboid-type serine protease that catalyzes intramembrane proteolysis. This is Rhomboid protease GlpG from Escherichia fergusonii (strain ATCC 35469 / DSM 13698 / CCUG 18766 / IAM 14443 / JCM 21226 / LMG 7866 / NBRC 102419 / NCTC 12128 / CDC 0568-73).